We begin with the raw amino-acid sequence, 695 residues long: Segment polarity protein dishevelled homolog DVL-1 (695 aa).

Residues 1 to 85 (MAETKIIYHM…RVVSWLVLAE (85 aa)) enclose the DIX domain. The disordered stretch occupies residues 89 to 235 (SDAGSQGTDS…QRLRQTDRAS (147 aa)). A compositionally biased stretch (basic residues) spans 142 to 151 (SHRRERARRR). A compositionally biased stretch (basic and acidic residues) spans 152–171 (NRDEAARTNGHPRGDRRRDL). The span at 177–192 (SASTVLSSELESSSFI) shows a compositional bias: low complexity. Phosphoserine is present on serine 194. Over residues 201-214 (SRLSSSTEQSTSSR) the composition is skewed to low complexity. Residues 215-228 (LVRKHKCRRRKQRL) are compositionally biased toward basic residues. The 73-residue stretch at 251 to 323 (TVTLNMERHH…NDDAVRVLRE (73 aa)) folds into the PDZ domain. The DEP domain maps to 425-499 (PDSGLEIRDR…SEQCYYVFGD (75 aa)). The segment covering 559–580 (SCGSGSAGSQQSEGSKSSGSTR) has biased composition (low complexity). Residues 559–641 (SCGSGSAGSQ…SQASAVAPGL (83 aa)) form a disordered region. Over residues 622–635 (SQLSRGSSPRSQAS) the composition is skewed to polar residues.

It belongs to the DSH family. Interacts with CXXC4. Interacts (via PDZ domain) with TMEM88. Interacts with BRD7 and INVS. Interacts (via PDZ domain) with VANGL1 and VANGL2 (via C-terminus). Interacts (via PDZ domain) with NXN. Interacts with ARRB1; the interaction is enhanced by phosphorylation of DVL1. Interacts with CYLD. Interacts (via PDZ domain) with RYK. Self-associates (via DIX domain) and forms higher homooligomers. Interacts (via PDZ domain) with DACT1 and FZD7, where DACT1 and FZD7 compete for the same binding site. Interacts (via DEP domain) with MUSK; the interaction is direct and mediates the formation a DVL1, MUSK and PAK1 ternary complex involved in AChR clustering. Interacts with DCDC2. Interacts with FOXK2. Interacts with PKD1 (via extracellular domain). Interacts (via PDZ domain) with CCDC88C/DAPLE; competes with CCDC88C for binding to frizzled receptor FZD7 and dissociates from CCDC88C following initiation of non-canonical Wnt signaling when CCDC88C displaces DVL1 from ligand-activated FZD7. Ubiquitinated; undergoes both 'Lys-48'-linked ubiquitination, leading to its subsequent degradation by the ubiquitin-proteasome pathway, and 'Lys-63'-linked ubiquitination. The interaction with INVS is required for ubiquitination. Deubiquitinated by CYLD, which acts on 'Lys-63'-linked ubiquitin chains. In terms of tissue distribution, high levels are seen in the brain, testis and kidney, lower levels in the ovary, breast, muscle, liver and small intestine, and very low levels are seen in the spleen and thymus. A moderate level expression is seen in the heart.

The protein localises to the cell membrane. It is found in the cytoplasm. Its subcellular location is the cytosol. The protein resides in the cytoplasmic vesicle. Participates in Wnt signaling by binding to the cytoplasmic C-terminus of frizzled family members and transducing the Wnt signal to down-stream effectors. Plays a role both in canonical and non-canonical Wnt signaling. Plays a role in the signal transduction pathways mediated by multiple Wnt genes. Required for LEF1 activation upon WNT1 and WNT3A signaling. DVL1 and PAK1 form a ternary complex with MUSK which is important for MUSK-dependent regulation of AChR clustering during the formation of the neuromuscular junction (NMJ). This chain is Segment polarity protein dishevelled homolog DVL-1 (Dvl1), found in Mus musculus (Mouse).